The following is a 190-amino-acid chain: NADH dehydrogenase [ubiquinone] iron-sulfur protein 3 (190 aa).

Belongs to the complex I 30 kDa subunit family. As to quaternary structure, complex I is composed of about 45 different subunits. This is a component of the iron-sulfur (IP) fragment of the enzyme.

It localises to the mitochondrion inner membrane. The catalysed reaction is a ubiquinone + NADH + 5 H(+)(in) = a ubiquinol + NAD(+) + 4 H(+)(out). Core subunit of the mitochondrial membrane respiratory chain NADH dehydrogenase (Complex I) that is believed to belong to the minimal assembly required for catalysis. Complex I functions in the transfer of electrons from NADH to the respiratory chain. The immediate electron acceptor for the enzyme is believed to be ubiquinone. The protein is NADH dehydrogenase [ubiquinone] iron-sulfur protein 3 (NAD9) of Solanum tuberosum (Potato).